The primary structure comprises 1101 residues: Rho guanine nucleotide exchange factor gef2 (1101 aa).

A disordered region spans residues 203–222; that stretch reads EDSRKKTSSPSPSFASSKDA. A compositionally biased stretch (low complexity) spans 210 to 219; sequence SSPSPSFASS. The DH domain maps to 230–428; that stretch reads KKKSLLIEMM…KNIAEMPTVD (199 aa). Ser-736 and Ser-977 each carry phosphoserine.

Its subcellular location is the cytoplasm. It is found in the cytoskeleton. It localises to the microtubule organizing center. The protein localises to the spindle pole body. Has a role in the control of cell polarity and cytokinesis. Involved in bipolar growth and septum formation. This chain is Rho guanine nucleotide exchange factor gef2 (gef2), found in Schizosaccharomyces pombe (strain 972 / ATCC 24843) (Fission yeast).